Here is a 143-residue protein sequence, read N- to C-terminus: Ribonuclease H (143 aa).

The 140-residue stretch at 1 to 140 (MKVEIYTDGA…VDALANLGIE (140 aa)) folds into the RNase H type-1 domain. Mg(2+)-binding residues include Asp-8, Glu-46, Asp-68, and Asp-132.

Belongs to the RNase H family. In terms of assembly, monomer. Requires Mg(2+) as cofactor.

The protein localises to the cytoplasm. The catalysed reaction is Endonucleolytic cleavage to 5'-phosphomonoester.. In terms of biological role, endonuclease that specifically degrades the RNA of RNA-DNA hybrids. This is Ribonuclease H from Legionella pneumophila (strain Lens).